The sequence spans 279 residues: Energy-coupling factor transporter ATP-binding protein EcfA2 (279 aa).

In terms of domain architecture, ABC transporter spans 3–245 (ITLKNVSYTY…LDFMESIQLG (243 aa)). 40–47 (GHTGSGKS) contributes to the ATP binding site.

Belongs to the ABC transporter superfamily. Energy-coupling factor EcfA family. In terms of assembly, forms a stable energy-coupling factor (ECF) transporter complex composed of 2 membrane-embedded substrate-binding proteins (S component), 2 ATP-binding proteins (A component) and 2 transmembrane proteins (T component).

It is found in the cell membrane. ATP-binding (A) component of a common energy-coupling factor (ECF) ABC-transporter complex. Unlike classic ABC transporters this ECF transporter provides the energy necessary to transport a number of different substrates. This chain is Energy-coupling factor transporter ATP-binding protein EcfA2, found in Streptococcus sanguinis (strain SK36).